Reading from the N-terminus, the 615-residue chain is MARVLGVLLCLLALFSSSLCLDHANGRGDQALAQINVYETSLALDSSVKLHASPQVLGSQGEDTEWVNLAISNPKPTSDDWIGVFSPAKFDSGNCWPTSGGKEKTPYICSSPIKYMYCNSHPDYMKSGNVTLKFQIINQRADVSFALFSNGVQEPHLLGVSNPVAFFNPKAPVYPRLALGKNWDEMTVTWTSGYNIDEAVPFIEWSAKGLPARRSPAGTLTFNRNSMCGNPARGVGWRDPGFFHTSFLKELWPNREYIYRLGHDLVNGSTIWSKNYTFVSSPYPGQDSKQRVIIFGDMGKGERDGSNEYNDYQPGSLNTTDQVIKDLKDIDIVFHIGDLTYSNGYLSQWDQFTAQVQPIASTVPYMIASGNHERDWPDTGSFYAGTDSGGECGVPAETMFYFPAENRAKFWYKTDYGMFRFCVADSEHDWREGTEQYKFIENCLATVDRKTQPWLIFIAHRVLGYSTNDWYGKEGTFEEPMGRESLQKLWQKYKVDLAFYGHVHNYERTCPIYESQCVNNDKDHYSGTFKGTIHVVVGGAGSHLSPFSSLVPKWSLVRDYDFGFVKLTASDHSSLLFEYKKSSTGQVYDSFNISRDYRDVLACTHDSCEPTTSAG.

Residues Met1 to Gly26 form the signal peptide. N-linked (GlcNAc...) asparagine glycans are attached at residues Asn129, Asn267, and Asn275. Asp297 contributes to the Fe cation binding site. N-linked (GlcNAc...) asparagine glycosylation is present at Asn318. Positions 338 and 341 each coordinate Fe cation. Asp338 lines the Zn(2+) pocket. Zn(2+) is bound by residues Asn371, His460, and His502. Residue Asn371 participates in substrate binding. His502–His504 is a binding site for substrate. His504 contacts Fe cation. Asn592 carries N-linked (GlcNAc...) asparagine glycosylation.

It belongs to the metallophosphoesterase superfamily. Purple acid phosphatase family. As to quaternary structure, homodimer. Fe cation serves as cofactor. Requires Zn(2+) as cofactor. As to expression, specifically expressed in flowers.

The protein localises to the secreted. This is Probable inactive purple acid phosphatase 24 (PAP24) from Arabidopsis thaliana (Mouse-ear cress).